The chain runs to 228 residues: Urease accessory protein UreH (228 aa).

5 helical membrane passes run 48–68, 79–99, 130–150, 162–182, and 196–216; these read VFWG…IILM, SLEF…ILSL, LFIG…LTMS, ILFF…LIGI, and AFIQ…MYNL.

The protein belongs to the NiCoT transporter (TC 2.A.52) family.

It is found in the cell membrane. Probably facilitates nickel incorporation. May constitute a multicomponent high-affinity nickel transporter. Not essential for the expression of catalytically active urease. This chain is Urease accessory protein UreH (ureH), found in Bacillus sp. (strain TB-90).